Consider the following 437-residue polypeptide: MKSALCIALALTWSLLVQAARQTVLAVADHDIGGYSTFLQSLTDRDFDVKTSYIKDESAKLFEYGERLYDNLILLSSQSKSLGPVFSPKSLLEFVQSGGNLFVVAGSQLPEGIRELGRQLDMFLAERQSVVVDHFNHAEGSDDIILLDGISENPYIISDETRAAGPILYKGIGHYLGPNPQTQPILRGNPTSYIYNTKTEAEVSKNPWAAGTQLFLVSVLQSSTGERVGLSGSIDMLKDEYLSPQSPSFSKSNFLFARDLTNWVFQRKGVLQATNMTYGKVAEPLESRNASCYRIKDEMIFSIDISLLEDGQQTPYVADDVQLELIMLDPYYRVNLVPVPSDSQTSQHYEAVLVAPDHYGDFTFKIEYKRPGLTPIEEKSTFTLRQFFHNEFPRFLPHAYPYYASCFSVLGAFLLFCGIWLLQKPAKPVVPSAKKQN.

A signal peptide spans 1 to 19; that stretch reads MKSALCIALALTWSLLVQA. Residues 20–401 lie on the Lumenal side of the membrane; that stretch reads ARQTVLAVAD…FPRFLPHAYP (382 aa). 2 N-linked (GlcNAc...) asparagine glycosylation sites follow: Asn-275 and Asn-289. The chain crosses the membrane as a helical span at residues 402 to 422; it reads YYASCFSVLGAFLLFCGIWLL. The Cytoplasmic portion of the chain corresponds to 423–437; sequence QKPAKPVVPSAKKQN.

This sequence belongs to the DDOST 48 kDa subunit family. Component of the oligosaccharyltransferase (OST) complex.

The protein resides in the endoplasmic reticulum. The protein localises to the membrane. Its pathway is protein modification; protein glycosylation. Subunit of the oligosaccharyl transferase (OST) complex that catalyzes the initial transfer of a defined glycan (Glc(3)Man(9)GlcNAc(2) in eukaryotes) from the lipid carrier dolichol-pyrophosphate to an asparagine residue within an Asn-X-Ser/Thr consensus motif in nascent polypeptide chains, the first step in protein N-glycosylation. N-glycosylation occurs cotranslationally and the complex associates with the Sec61 complex at the channel-forming translocon complex that mediates protein translocation across the endoplasmic reticulum (ER). All subunits are required for a maximal enzyme activity. The protein is Dolichyl-diphosphooligosaccharide--protein glycosyltransferase subunit wbp1 (wbp1) of Schizosaccharomyces pombe (strain 972 / ATCC 24843) (Fission yeast).